Here is a 1228-residue protein sequence, read N- to C-terminus: DNA-directed RNA polymerase subunit beta (1228 aa).

This sequence belongs to the RNA polymerase beta chain family. In terms of assembly, the RNAP catalytic core consists of 2 alpha, 1 beta, 1 beta' and 1 omega subunit. When a sigma factor is associated with the core the holoenzyme is formed, which can initiate transcription.

It carries out the reaction RNA(n) + a ribonucleoside 5'-triphosphate = RNA(n+1) + diphosphate. In terms of biological role, DNA-dependent RNA polymerase catalyzes the transcription of DNA into RNA using the four ribonucleoside triphosphates as substrates. This chain is DNA-directed RNA polymerase subunit beta, found in Leptospira biflexa.